A 557-amino-acid polypeptide reads, in one-letter code: CCR4-NOT transcription complex subunit 6 (557 aa).

4 LRR repeats span residues 52 to 73 (HLTALHLSDNSLSCIPSDIAKL), 75 to 96 (NLVYLDLSHNQIQSLPAELGNM), 98 to 120 (SLRELHLNYNQLRVLPFELGKLF), and 121 to 143 (QLQTLSLKGNPLTQDILNLCLEP). Residues 153-557 (LLDNLSGTAK…VNGIHLPGRR (405 aa)) form a nuclease domain region. Glu-240 is a Mg(2+) binding site. Substrate is bound by residues Glu-240, Glu-276, His-361, and Pro-366. Asp-412 is a binding site for Mg(2+). Residue Asp-412 is the Proton donor/acceptor of the active site. Residues Asn-414, Asn-481, and Phe-486 each contribute to the substrate site.

It belongs to the CCR4/nocturin family. Component of the CCR4-NOT complex; distinct complexes seem to exist that differ in the participation of probably mutually exclusive catalytic subunits; the complex contains two deadenylase subunits, CNOT6 or CNOT6L, and CNOT7 or CNOT8. Interacts with CNOT7 and CNOT8. Interacts with UNR. Interacts with ZFP36L1 (via N-terminus). Interacts with ZNF335. It depends on Mg(2+) as a cofactor.

The protein localises to the cytoplasm. Its subcellular location is the nucleus. The catalysed reaction is Exonucleolytic cleavage of poly(A) to 5'-AMP.. In terms of biological role, poly(A) nuclease with 3'-5' RNase activity. Catalytic component of the CCR4-NOT complex which is one of the major cellular mRNA deadenylases and is linked to various cellular processes including bulk mRNA degradation, miRNA-mediated repression, translational repression during translational initiation and general transcription regulation. Additional complex functions may be a consequence of its influence on mRNA expression. Involved in mRNA decay mediated by the major-protein-coding determinant of instability (mCRD) of the FOS gene in the cytoplasm. In the presence of ZNF335, enhances ligand-dependent transcriptional activity of nuclear hormone receptors. Mediates cell proliferation and cell survival and prevents cellular senescence. The chain is CCR4-NOT transcription complex subunit 6 (Cnot6) from Mus musculus (Mouse).